The sequence spans 338 residues: Lipoate-protein ligase A (338 aa).

A BPL/LPL catalytic domain is found at 29-216 (PATQRVLFLW…AFFAHYGERV (188 aa)). ATP contacts are provided by residues Arg-71, 76–79 (GAVF), and Lys-134. Lys-134 contributes to the (R)-lipoate binding site.

This sequence belongs to the LplA family. Monomer.

It localises to the cytoplasm. The enzyme catalyses L-lysyl-[lipoyl-carrier protein] + (R)-lipoate + ATP = N(6)-[(R)-lipoyl]-L-lysyl-[lipoyl-carrier protein] + AMP + diphosphate + H(+). It functions in the pathway protein modification; protein lipoylation via exogenous pathway; protein N(6)-(lipoyl)lysine from lipoate: step 1/2. It participates in protein modification; protein lipoylation via exogenous pathway; protein N(6)-(lipoyl)lysine from lipoate: step 2/2. Catalyzes both the ATP-dependent activation of exogenously supplied lipoate to lipoyl-AMP and the transfer of the activated lipoyl onto the lipoyl domains of lipoate-dependent enzymes. In Escherichia fergusonii (strain ATCC 35469 / DSM 13698 / CCUG 18766 / IAM 14443 / JCM 21226 / LMG 7866 / NBRC 102419 / NCTC 12128 / CDC 0568-73), this protein is Lipoate-protein ligase A.